Consider the following 280-residue polypeptide: C-type lectin domain family 1 member A (280 aa).

Residues 1-44 (MQAKYSSTRDMLDDDGDTTMSLHSQGSATTRHPEPRRTEHRAPS) form a disordered region. The Cytoplasmic segment spans residues 1–52 (MQAKYSSTRDMLDDDGDTTMSLHSQGSATTRHPEPRRTEHRAPSSTWRPVAL). Over residues 18–30 (TTMSLHSQGSATT) the composition is skewed to polar residues. Basic and acidic residues predominate over residues 31 to 42 (RHPEPRRTEHRA). Residues 53–73 (TLLTLCLVLLIGLAALGLLFF) traverse the membrane as a helical; Signal-anchor for type II membrane protein segment. The Extracellular portion of the chain corresponds to 74–280 (QYYQLSNTGQ…VPPETLGEGD (207 aa)). Residues Asn-95 and Asn-169 are each glycosylated (N-linked (GlcNAc...) asparagine). One can recognise a C-type lectin domain in the interval 144-258 (HGDNCYQFYK…CKELKRCVCE (115 aa)). Disulfide bonds link Cys-165-Cys-257 and Cys-236-Cys-249.

Expressed preferentially in dendritic cells.

It is found in the membrane. This chain is C-type lectin domain family 1 member A (CLEC1A), found in Homo sapiens (Human).